A 372-amino-acid chain; its full sequence is Heat shock 70 kDa protein II (372 aa).

Belongs to the heat shock protein 70 family.

The chain is Heat shock 70 kDa protein II (HSP70II) from Paracentrotus lividus (Common sea urchin).